The primary structure comprises 178 residues: MSKILAKLPTEMRGELKDPLGEIYTDTDELLADAGDPLVAVGDIVTYHLLEAGHRPAAAIVDGKTERERVERKVLSAIEEFDERIDVANPQSTITDDLLEALSTALDRPDPTVVVVDGEEDLASLPAVVAAPVGASVVYGQPGEGMVLVHVTDETQAECRDIIERMQSDYSQIESILS.

Residues Asp43, Ile44, Val45, Asp62, Lys64, and Glu120 each contribute to the GTP site.

The protein belongs to the GTP-dependent DPCK family.

The enzyme catalyses 3'-dephospho-CoA + GTP = GDP + CoA + H(+). It functions in the pathway cofactor biosynthesis; coenzyme A biosynthesis. Catalyzes the GTP-dependent phosphorylation of the 3'-hydroxyl group of dephosphocoenzyme A to form coenzyme A (CoA). This Natronomonas pharaonis (strain ATCC 35678 / DSM 2160 / CIP 103997 / JCM 8858 / NBRC 14720 / NCIMB 2260 / Gabara) (Halobacterium pharaonis) protein is GTP-dependent dephospho-CoA kinase.